The chain runs to 325 residues: Heat-inducible transcription repressor HrcA (325 aa).

It belongs to the HrcA family.

Negative regulator of class I heat shock genes (grpE-dnaK-dnaJ and groELS operons). Prevents heat-shock induction of these operons. This chain is Heat-inducible transcription repressor HrcA, found in Staphylococcus aureus (strain JH1).